The primary structure comprises 319 residues: 4-hydroxy-3-methylbut-2-enyl diphosphate reductase (319 aa).

Cys-15 contributes to the [4Fe-4S] cluster binding site. His-44 and His-77 together coordinate (2E)-4-hydroxy-3-methylbut-2-enyl diphosphate. 2 residues coordinate dimethylallyl diphosphate: His-44 and His-77. 2 residues coordinate isopentenyl diphosphate: His-44 and His-77. Cys-99 contacts [4Fe-4S] cluster. His-127 is a (2E)-4-hydroxy-3-methylbut-2-enyl diphosphate binding site. His-127 is a dimethylallyl diphosphate binding site. His-127 is a binding site for isopentenyl diphosphate. Glu-129 (proton donor) is an active-site residue. Thr-172 serves as a coordination point for (2E)-4-hydroxy-3-methylbut-2-enyl diphosphate. Position 202 (Cys-202) interacts with [4Fe-4S] cluster. The (2E)-4-hydroxy-3-methylbut-2-enyl diphosphate site is built by Ser-230, Ser-231, Asn-232, and Ser-274. Residues Ser-230, Ser-231, Asn-232, and Ser-274 each contribute to the dimethylallyl diphosphate site. Isopentenyl diphosphate is bound by residues Ser-230, Ser-231, Asn-232, and Ser-274.

Belongs to the IspH family. [4Fe-4S] cluster is required as a cofactor.

It carries out the reaction isopentenyl diphosphate + 2 oxidized [2Fe-2S]-[ferredoxin] + H2O = (2E)-4-hydroxy-3-methylbut-2-enyl diphosphate + 2 reduced [2Fe-2S]-[ferredoxin] + 2 H(+). It catalyses the reaction dimethylallyl diphosphate + 2 oxidized [2Fe-2S]-[ferredoxin] + H2O = (2E)-4-hydroxy-3-methylbut-2-enyl diphosphate + 2 reduced [2Fe-2S]-[ferredoxin] + 2 H(+). It functions in the pathway isoprenoid biosynthesis; dimethylallyl diphosphate biosynthesis; dimethylallyl diphosphate from (2E)-4-hydroxy-3-methylbutenyl diphosphate: step 1/1. Its pathway is isoprenoid biosynthesis; isopentenyl diphosphate biosynthesis via DXP pathway; isopentenyl diphosphate from 1-deoxy-D-xylulose 5-phosphate: step 6/6. Functionally, catalyzes the conversion of 1-hydroxy-2-methyl-2-(E)-butenyl 4-diphosphate (HMBPP) into a mixture of isopentenyl diphosphate (IPP) and dimethylallyl diphosphate (DMAPP). Acts in the terminal step of the DOXP/MEP pathway for isoprenoid precursor biosynthesis. This is 4-hydroxy-3-methylbut-2-enyl diphosphate reductase from Xanthomonas euvesicatoria pv. vesicatoria (strain 85-10) (Xanthomonas campestris pv. vesicatoria).